A 322-amino-acid polypeptide reads, in one-letter code: F-actin-capping protein subunit beta (322 aa).

Belongs to the F-actin-capping protein beta subunit family. Component of the F-actin capping complex, composed of a heterodimer of an alpha and a beta subunit.

It is found in the cytoplasm. The protein localises to the cytoskeleton. The protein resides in the actin patch. Functionally, F-actin-capping proteins bind in a Ca(2+)-independent manner to the fast growing ends of actin filaments (barbed end) thereby blocking the exchange of subunits at these ends. Unlike other capping proteins (such as gelsolin and severin), these proteins do not sever actin filaments. The polypeptide is F-actin-capping protein subunit beta (cap2) (Aspergillus fumigatus (strain ATCC MYA-4609 / CBS 101355 / FGSC A1100 / Af293) (Neosartorya fumigata)).